The chain runs to 78 residues: Large ribosomal subunit protein bL28 (78 aa).

Belongs to the bacterial ribosomal protein bL28 family.

The chain is Large ribosomal subunit protein bL28 from Pseudoalteromonas atlantica (strain T6c / ATCC BAA-1087).